Reading from the N-terminus, the 417-residue chain is D-amino acid dehydrogenase (417 aa).

3–17 (AVVLGSGVVGLMSAW) contacts FAD.

The protein belongs to the DadA oxidoreductase family. FAD serves as cofactor.

The catalysed reaction is a D-alpha-amino acid + A + H2O = a 2-oxocarboxylate + AH2 + NH4(+). Its function is as follows. Oxidative deamination of D-amino acids. This chain is D-amino acid dehydrogenase, found in Vibrio vulnificus (strain YJ016).